A 199-amino-acid polypeptide reads, in one-letter code: Glycerol-3-phosphate acyltransferase (199 aa).

5 helical membrane passes run 5–25 (AYLL…IIFC), 54–74 (AAIG…LIAF), 82–102 (AIGL…FFQF), 114–134 (VFFS…LIVF), and 154–174 (YIWC…CLLI).

This sequence belongs to the PlsY family. In terms of assembly, probably interacts with PlsX.

The protein resides in the cell inner membrane. It carries out the reaction an acyl phosphate + sn-glycerol 3-phosphate = a 1-acyl-sn-glycero-3-phosphate + phosphate. It functions in the pathway lipid metabolism; phospholipid metabolism. Functionally, catalyzes the transfer of an acyl group from acyl-phosphate (acyl-PO(4)) to glycerol-3-phosphate (G3P) to form lysophosphatidic acid (LPA). This enzyme utilizes acyl-phosphate as fatty acyl donor, but not acyl-CoA or acyl-ACP. The sequence is that of Glycerol-3-phosphate acyltransferase from Haemophilus ducreyi (strain 35000HP / ATCC 700724).